The following is a 170-amino-acid chain: MAPKKAKRRAAAEGGSSNVFSMFDQTQIQEFKEAFTVIDQNRDGIIDKEDLRDTFAAMGRLNVKNEELDAMMKEASGPINFTVFLTMFGEKLKGADPEDVITGAFKVLDPEGKGTIKKQFLEELLTTQCDRFSQEEIKNMWAAFPPDVGGNVDYKNICYVITHGDAKDQE.

The residue at position 2 (Ala2) is a N,N,N-trimethylalanine. Ser16 and Ser17 each carry phosphoserine. Thr26 and Thr36 each carry phosphothreonine. Positions 26–61 constitute an EF-hand 1 domain; the sequence is TQIQEFKEAFTVIDQNRDGIIDKEDLRDTFAAMGRL. Positions 39, 41, 43, and 50 each coordinate Ca(2+). The residue at position 76 (Ser76) is a Phosphoserine. EF-hand domains follow at residues 96–131 and 132–167; these read DPED…QCDR and FSQE…GDAK. Position 102 is a phosphothreonine (Thr102).

Myosin is a hexamer of 2 heavy chains and 4 light chains. N,N,N-trimethylalanine found in this myosin light chain would not have been detected in the N-terminal tryptic peptide in PubMed:863872 and PubMed:352892 because it would remain trimethylated and ninhydrin negative after hydrolysis.

Its function is as follows. Myosin regulatory subunit that plays an essential role to maintain muscle integrity during early development. Plays a role in muscle contraction. The sequence is that of Myosin regulatory light chain 11 (MYL11) from Oryctolagus cuniculus (Rabbit).